The sequence spans 146 residues: Hemoglobin subunit beta (146 aa).

Val1 bears the N-acetylvaline mark. Positions 2–146 (HLSADEKNAL…VANALAHKYH (145 aa)) constitute a Globin domain. Phosphoserine is present on Ser44. At Lys59 the chain carries N6-acetyllysine. Residue His63 coordinates heme b. At Lys82 the chain carries N6-acetyllysine. His92 is a heme b binding site. Cys93 carries the S-nitrosocysteine modification. At Lys144 the chain carries N6-acetyllysine.

Belongs to the globin family. In terms of assembly, heterotetramer of two alpha chains and two beta chains. Red blood cells.

Its function is as follows. Involved in oxygen transport from the lung to the various peripheral tissues. The chain is Hemoglobin subunit beta from Sciurus carolinensis (Eastern gray squirrel).